We begin with the raw amino-acid sequence, 281 residues long: Nuclear transcription factor Y subunit nfya-2 (281 aa).

2 disordered regions span residues Met1–Gln27 and Arg163–Glu261. Positions Met150 to Gly173 match the Subunit association domain (SAD) motif. The span at Arg166–Arg188 shows a compositional bias: basic and acidic residues. Residues Gln180–Asn204 constitute a DNA-binding region (NFYA/HAP2-type). The span at Gln189 to Gly198 shows a compositional bias: basic residues. Low complexity predominate over residues Asn204–Ala220.

It belongs to the NFYA/HAP2 subunit family. Forms a heterotrimeric transcription factor complex (nfya-2-NF-Y complex) composed of nfya-2, nfyb-1 and nfyc-1. Interacts with the nfyb-1 and nfyc-1 dimer; the interaction is required for subsequent binding to the 5'-CCAAT-3' box motif in DNA. Does not interact with either nfyb-1 or nfyc-1 in their monomeric form. Highly expressed in certain parts of the gonads. Expressed in the spermatheca, intestine and in some neurons in the head. Not expressed in the intestine, the hypodermis, body wall muscle surrounding the pseudocoelomic space, secretory cells in the pharyngeal terminal bulb wall, in the small ganglia surrounding the pharynx and in the neurons running anteriorly to the sensory organs in the head.

It localises to the nucleus. In terms of biological role, component of the sequence-specific heterotrimeric transcription factor (nfya-2-NF-Y) which specifically recognizes a 5'-CCAAT-3' box motif found in the promoters of its target genes to regulate their expression and control cellular identity in particular tissue types. In association with the components in the nfya-2-NF-Y complex, may repress the expression of the T-box transcription factor tbx-2 throughout larval development, which most likely restricts its expression to certain tissues. The polypeptide is Nuclear transcription factor Y subunit nfya-2 (Caenorhabditis elegans).